Reading from the N-terminus, the 220-residue chain is Peptide methionine sulfoxide reductase MsrA (220 aa).

The active site involves Cys-54.

The protein belongs to the MsrA Met sulfoxide reductase family.

It catalyses the reaction L-methionyl-[protein] + [thioredoxin]-disulfide + H2O = L-methionyl-(S)-S-oxide-[protein] + [thioredoxin]-dithiol. It carries out the reaction [thioredoxin]-disulfide + L-methionine + H2O = L-methionine (S)-S-oxide + [thioredoxin]-dithiol. Has an important function as a repair enzyme for proteins that have been inactivated by oxidation. Catalyzes the reversible oxidation-reduction of methionine sulfoxide in proteins to methionine. The polypeptide is Peptide methionine sulfoxide reductase MsrA (Salinispora arenicola (strain CNS-205)).